Reading from the N-terminus, the 391-residue chain is MDLEKNYPTPRTIRTGHGGVNQLGGVFVNGRPLPDVVRQRIVELAHQGVRPCDISRQLRVSHGCVSKILGRYYETGSIKPGVIGGSKPKVATPKVVEKIAEYKRQNPTMFAWEIRDRLLAERVCDNDTVPSVSSINRIIRTKVQQPPNQPVPASSHSIVSTGSVTQVSSVSTDSAGSSYSISGILGITSPSADTNKRKRDEGIQESPVPNGHSLPGRDFLRKQMRGDLFTQQQLEVLDRVFERQHYSDIFTTTEPIKPEQTTEYSAMASLAGGLDDMKANLTSPTPADIGSSVPGPQSYPIVTGRDLASTTLPGYPPHVPPAGQGSYSAPTLTGMVPGSEFSGSPYSHPQYSSYNDSWRFPNPGLLGSPYYYSPAARGAAPPAAATAYDRH.

Residues 16–142 (GHGGVNQLGG…SSINRIIRTK (127 aa)) constitute a DNA-binding region (paired). Residues 19 to 75 (GVNQLGGVFVNGRPLPDVVRQRIVELAHQGVRPCDISRQLRVSHGCVSKILGRYYET) are PAI subdomain. The tract at residues 94-142 (KVVEKIAEYKRQNPTMFAWEIRDRLLAERVCDNDTVPSVSSINRIIRTK) is RED subdomain. Residues 182–218 (SGILGITSPSADTNKRKRDEGIQESPVPNGHSLPGRD) are disordered.

As to quaternary structure, interacts with ETS1; this interaction alters PAX5 DNA-binding properties. Binds DNA as a monomer. Interacts with TBP; this interaction allows PAX5 to interact with the basal transcription machinery. Interacts with RB1. Interacts with TLE4. Interacts with DAXX. O-glycosylated. Post-translationally, phosphorylated by SYK. This phosphorylation plays an important role in the abolition of BLIMP1 repression by PAX5 in order to trigger plasma cell differentiation. Expressed in all B-lymphoid organs, in the embryonic midbrain and in adult testis.

It is found in the nucleus. Its function is as follows. Transcription factor that plays an essential role in commitment of lymphoid progenitors to the B-lymphocyte lineage. Fulfills a dual role by repressing B-lineage inappropriate genes and simultaneously activating B-lineage-specific genes. In turn, regulates cell adhesion and migration, induces V(H)-to-D(H)J(H) recombination, facilitates pre-B-cell receptor signaling and promotes development to the mature B-cell stage. Repression of the cohesin-release factor WAPL causes global changes of the chromosomal architecture in pro-B cells to facilitate the generation of a diverse antibody repertoire. This is Paired box protein Pax-5 (Pax5) from Mus musculus (Mouse).